We begin with the raw amino-acid sequence, 336 residues long: MALRLITRFRGLNIPQRSLHQSTFRLNETIQSTTTTTTTTTTTTTSDEIPTTKPRFQSRFRRNQQPHQQQRSPYTSSQVTENLNIGEINRVRTVPTLMTYYGGNPVHEDNMNRLRAVLKKYQQLPVRVVPDREIQSQKFIGFDDYLEKTQSGTRVKKIHYRELITLLNRLRTIDLELMPLEVSEILSEYTSKSVSKIVQLSREKTLDCFGRAKTQAKRKSSIAKIYLVKGEGEVLVNGKSLIEFFPNIYARKNLLYPFQVVEQEGKYNVFAQVTGGGYTGQSEAIMYAIAKALVVFNPLLKPRLSKAGLMKSDTRIVERKKPGKVKARKSPTWVKR.

Positions 32–81 are disordered; sequence STTTTTTTTTTTTTSDEIPTTKPRFQSRFRRNQQPHQQQRSPYTSSQVTE. The span at 33-45 shows a compositional bias: low complexity; that stretch reads TTTTTTTTTTTTT. Polar residues predominate over residues 65–81; sequence QPHQQQRSPYTSSQVTE.

This sequence belongs to the universal ribosomal protein uS9 family. Component of the mitochondrial small ribosomal subunit (mt-SSU).

It localises to the mitochondrion. Component of the mitochondrial ribosome (mitoribosome), a dedicated translation machinery responsible for the synthesis of mitochondrial genome-encoded proteins, including at least some of the essential transmembrane subunits of the mitochondrial respiratory chain. The mitoribosomes are attached to the mitochondrial inner membrane and translation products are cotranslationally integrated into the membrane. This is Small ribosomal subunit protein uS9m (MRPS9) from Candida albicans (strain SC5314 / ATCC MYA-2876) (Yeast).